Reading from the N-terminus, the 1372-residue chain is Paired amphipathic helix protein Sin3-like 1 (1372 aa).

A disordered region spans residues 1–50; sequence MKRIRDDVYASGSQFRRPLGSSRGQLCGQSPVHGSGDTEEEEEGGSRRVS. PAH domains lie at 51 to 121 and 136 to 206; these read QKLT…LPKG and KTVE…LPAS. Residues 210–222 show a composition bias toward low complexity; it reads HSAAQHSRSQAQQ. Disordered regions lie at residues 210 to 244 and 272 to 323; these read HSAA…ERRR and REQR…SGSA. Over residues 272–315 the composition is skewed to basic and acidic residues; it reads REQRKRLDKENRARRGRDLDDREAGQDNLHHFPEKRKSSRRAEA. A PAH 3 domain is found at 331–400; it reads LKSMYKQAFV…DEFNQFFERC (70 aa). Disordered stretches follow at residues 764–783, 791–817, and 934–1056; these read DVNH…GGDT, LKSA…NKDS, and GLRS…AEGM. Residues 938–957 show a composition bias toward basic and acidic residues; that stretch reads DSSKGTRNSDDPEGPSRNEK. 2 stretches are compositionally biased toward acidic residues: residues 990–1013 and 1028–1042; these read AEAE…DSEN and SQDE…EHDE. Serine 1049 is modified (phosphoserine).

Interacts (via PAH3) with ALY2. Interacts (via PAH2) with TBP1. Interacts with ALY3, GATA21, TRP2, TKI1, VAL1, SKP1B, FBX5 and PUB14.

The protein localises to the nucleus. In terms of biological role, acts as a transcriptional repressor. A histone deacetylase (HDAC) activity is required for transcription repression. May play a role in telomere stability. This chain is Paired amphipathic helix protein Sin3-like 1 (SNL1), found in Arabidopsis thaliana (Mouse-ear cress).